Reading from the N-terminus, the 153-residue chain is ATP synthase subunit b' (153 aa).

The helical transmembrane segment at 23 to 40 (LMAIQVVALTYILNSLFF) threads the bilayer.

Belongs to the ATPase B chain family. As to quaternary structure, F-type ATPases have 2 components, F(1) - the catalytic core - and F(0) - the membrane proton channel. F(1) has five subunits: alpha(3), beta(3), gamma(1), delta(1), epsilon(1). F(0) has four main subunits: a(1), b(1), b'(1) and c(10-14). The alpha and beta chains form an alternating ring which encloses part of the gamma chain. F(1) is attached to F(0) by a central stalk formed by the gamma and epsilon chains, while a peripheral stalk is formed by the delta, b and b' chains.

It localises to the cellular thylakoid membrane. F(1)F(0) ATP synthase produces ATP from ADP in the presence of a proton or sodium gradient. F-type ATPases consist of two structural domains, F(1) containing the extramembraneous catalytic core and F(0) containing the membrane proton channel, linked together by a central stalk and a peripheral stalk. During catalysis, ATP synthesis in the catalytic domain of F(1) is coupled via a rotary mechanism of the central stalk subunits to proton translocation. Its function is as follows. Component of the F(0) channel, it forms part of the peripheral stalk, linking F(1) to F(0). The b'-subunit is a diverged and duplicated form of b found in plants and photosynthetic bacteria. The polypeptide is ATP synthase subunit b' (Prochlorococcus marinus (strain MIT 9312)).